The primary structure comprises 105 residues: Early nodulin-93 (105 aa).

A helical transmembrane segment spans residues T66–V83.

The protein localises to the membrane. The chain is Early nodulin-93 from Glycine max (Soybean).